Here is a 375-residue protein sequence, read N- to C-terminus: DNA replication and repair protein RecF (375 aa).

34–41 contacts ATP; it reads GDNGAGKT.

Belongs to the RecF family.

The protein localises to the cytoplasm. In terms of biological role, the RecF protein is involved in DNA metabolism; it is required for DNA replication and normal SOS inducibility. RecF binds preferentially to single-stranded, linear DNA. It also seems to bind ATP. This is DNA replication and repair protein RecF from Rhizobium rhizogenes (strain K84 / ATCC BAA-868) (Agrobacterium radiobacter).